A 218-amino-acid polypeptide reads, in one-letter code: Ribonuclease T (218 aa).

The Exonuclease domain occupies 22–196; the sequence is VVVDVETAGF…YDAMKTAELF (175 aa). The Mg(2+) site is built by Asp-25, Glu-27, His-183, and Asp-188. The active-site Proton donor/acceptor is the His-183.

The protein belongs to the RNase T family. As to quaternary structure, homodimer. Mg(2+) is required as a cofactor.

In terms of biological role, trims short 3' overhangs of a variety of RNA species, leaving a one or two nucleotide 3' overhang. Responsible for the end-turnover of tRNA: specifically removes the terminal AMP residue from uncharged tRNA (tRNA-C-C-A). Also appears to be involved in tRNA biosynthesis. The sequence is that of Ribonuclease T from Hahella chejuensis (strain KCTC 2396).